We begin with the raw amino-acid sequence, 459 residues long: Putative flavin-containing monooxygenase 2 (459 aa).

FAD-binding positions include 17 to 21 (GAGVS), glutamate 38, and 46 to 47 (VW). NADP(+) is bound at residue 217 to 220 (SAID).

This sequence belongs to the FMO family. FAD serves as cofactor.

The chain is Putative flavin-containing monooxygenase 2 (FMO2) from Arabidopsis thaliana (Mouse-ear cress).